We begin with the raw amino-acid sequence, 156 residues long: ATP synthase subunit b (156 aa).

Residues 7 to 29 form a helical membrane-spanning segment; that stretch reads LIGQSVAFLIFVWFCMKFVWPPL.

The protein belongs to the ATPase B chain family. F-type ATPases have 2 components, F(1) - the catalytic core - and F(0) - the membrane proton channel. F(1) has five subunits: alpha(3), beta(3), gamma(1), delta(1), epsilon(1). F(0) has three main subunits: a(1), b(2) and c(10-14). The alpha and beta chains form an alternating ring which encloses part of the gamma chain. F(1) is attached to F(0) by a central stalk formed by the gamma and epsilon chains, while a peripheral stalk is formed by the delta and b chains.

It is found in the cell inner membrane. Functionally, f(1)F(0) ATP synthase produces ATP from ADP in the presence of a proton or sodium gradient. F-type ATPases consist of two structural domains, F(1) containing the extramembraneous catalytic core and F(0) containing the membrane proton channel, linked together by a central stalk and a peripheral stalk. During catalysis, ATP synthesis in the catalytic domain of F(1) is coupled via a rotary mechanism of the central stalk subunits to proton translocation. Its function is as follows. Component of the F(0) channel, it forms part of the peripheral stalk, linking F(1) to F(0). The polypeptide is ATP synthase subunit b (Shewanella denitrificans (strain OS217 / ATCC BAA-1090 / DSM 15013)).